The chain runs to 821 residues: Ent-isokaur-15-ene synthase (821 aa).

Residues aspartate 556, aspartate 560, asparagine 701, threonine 705, and glutamate 709 each coordinate Mg(2+). Positions 556–560 match the DDXXD motif motif; it reads DDFFD.

It belongs to the terpene synthase family. The cofactor is Mg(2+).

It catalyses the reaction ent-copalyl diphosphate = ent-isokaurene + diphosphate. It functions in the pathway secondary metabolite biosynthesis; terpenoid biosynthesis. Functionally, involved in the biosynthesis of ent-kaurene diterpenoids natural products. Catalyzes the conversion of ent-copalyl diphosphate to the phytoalexin precursor ent-isokaur-15-ene. This is Ent-isokaur-15-ene synthase from Oryza sativa subsp. indica (Rice).